A 252-amino-acid chain; its full sequence is Phosphoribosyl-ATP pyrophosphatase (252 aa).

The protein belongs to the PRA-PH family.

The protein resides in the cytoplasm. It catalyses the reaction 1-(5-phospho-beta-D-ribosyl)-ATP + H2O = 1-(5-phospho-beta-D-ribosyl)-5'-AMP + diphosphate + H(+). It participates in amino-acid biosynthesis; L-histidine biosynthesis; L-histidine from 5-phospho-alpha-D-ribose 1-diphosphate: step 2/9. In Magnetococcus marinus (strain ATCC BAA-1437 / JCM 17883 / MC-1), this protein is Phosphoribosyl-ATP pyrophosphatase.